The chain runs to 452 residues: Phosphoglucosamine mutase 2 (452 aa).

Residue serine 101 is the Phosphoserine intermediate of the active site. Mg(2+) contacts are provided by serine 101, aspartate 245, aspartate 247, and aspartate 249. Serine 101 is modified (phosphoserine).

This sequence belongs to the phosphohexose mutase family. Mg(2+) is required as a cofactor. Post-translationally, activated by phosphorylation.

The catalysed reaction is alpha-D-glucosamine 1-phosphate = D-glucosamine 6-phosphate. Functionally, catalyzes the conversion of glucosamine-6-phosphate to glucosamine-1-phosphate. The polypeptide is Phosphoglucosamine mutase 2 (Shewanella amazonensis (strain ATCC BAA-1098 / SB2B)).